The chain runs to 786 residues: Constitutive coactivator of peroxisome proliferator-activated receptor gamma (786 aa).

The segment at 1–561 (MGVRGLQGFV…GTPSLEVLWL (561 aa)) is mediates transactivation of PPARG. Disordered regions lie at residues 371-413 (PNQE…KLPS) and 738-786 (HWDS…WRRY). Positions 750–771 (QGYSSYRTDSTHGHSGQSWRNQ) are enriched in polar residues.

Belongs to the constitutive coactivator of PPAR-gamma family. Interacts with ESR1 and RXRA. Interacts with PPARG; in a ligand-independent manner. Ubiquitously expressed (at protein level).

The protein localises to the nucleus. Its function is as follows. Functions as a transactivator of PPARG and ESR1. Functions in adipogenesis through PPARG activation. The protein is Constitutive coactivator of peroxisome proliferator-activated receptor gamma (Fam120b) of Mus musculus (Mouse).